A 66-amino-acid polypeptide reads, in one-letter code: Stress-induced protein KIN1 (66 aa).

Residues 1 to 13 (MSETNKNAFQAGQ) show a composition bias toward polar residues. Residues 1-52 (MSETNKNAFQAGQTAGKAEEKSNVLLDKAKDAAAGAGAGAQQAGKSVSDAAA) are disordered. Residues 17–31 (KAEEKSNVLLDKAKD) show a composition bias toward basic and acidic residues. 2 repeats span residues 31–35 (DAAAG) and 49–53 (DAAAG). Over residues 32-45 (AAAGAGAGAQQAGK) the composition is skewed to low complexity.

This Arabidopsis thaliana (Mouse-ear cress) protein is Stress-induced protein KIN1 (KIN1).